We begin with the raw amino-acid sequence, 565 residues long: uncharacterized protein (565 aa).

A run of 10 helical transmembrane segments spans residues 28 to 48, 73 to 93, 109 to 129, 169 to 189, 262 to 282, 315 to 335, 364 to 384, 393 to 413, 461 to 481, and 526 to 546; these read IFHF…LPFA, ASYG…DTGL, VLAI…FLVW, LFLF…FYFI, IVIQ…YPVL, LIVT…VITS, SLIF…FGVI, VFPW…AMFI, AFLV…LLPL, and TLGL…LTFV.

This sequence belongs to the TrkH potassium transport family.

The protein resides in the cell membrane. This is an uncharacterized protein from Mycoplasma pneumoniae (strain ATCC 29342 / M129 / Subtype 1) (Mycoplasmoides pneumoniae).